A 258-amino-acid polypeptide reads, in one-letter code: E3 ubiquitin ligase TRIM40 (258 aa).

Residues cysteine 14–cysteine 56 form an RING-type zinc finger. A B box-type zinc finger spans residues glycine 66–isoleucine 107. Residues cysteine 71, histidine 74, cysteine 93, and histidine 99 each contribute to the Zn(2+) site. Residues isoleucine 107–alanine 159 adopt a coiled-coil conformation.

It belongs to the TRIM/RBCC family. In terms of assembly, interacts with NEDD8. As to expression, highly expressed in normal gastrointestinal epithelia but that is down-regulated in gastrointestinal carcinomas and chronic inflammatory lesions of the gastrointestinal tract.

The catalysed reaction is S-ubiquitinyl-[E2 ubiquitin-conjugating enzyme]-L-cysteine + [acceptor protein]-L-lysine = [E2 ubiquitin-conjugating enzyme]-L-cysteine + N(6)-ubiquitinyl-[acceptor protein]-L-lysine.. In terms of biological role, E3 ubiquitin-protein ligase that plays a role in the limitation of the innate immune response. Mediates inhibition of the RLR signaling pathway by ubiquitinating RIGI and IFIH1 receptors, leading to their proteasomal degradation. Also promotes the neddylation of IKBKG/NEMO, stabilizing NFKBIA, and thereby inhibiting of NF-kappa-B nuclear translocation and activation. In Homo sapiens (Human), this protein is E3 ubiquitin ligase TRIM40 (TRIM40).